We begin with the raw amino-acid sequence, 668 residues long: Type II methyltransferase M.MwoI (668 aa).

It belongs to the N(4)/N(6)-methyltransferase family. N(4) subfamily.

The catalysed reaction is a 2'-deoxycytidine in DNA + S-adenosyl-L-methionine = an N(4)-methyl-2'-deoxycytidine in DNA + S-adenosyl-L-homocysteine + H(+). Its function is as follows. A beta subtype methylase, recognizes the double-stranded DNA sequence 5'-GCNNNNNNNGC-3', methylates C-2 on both strands, and protects the DNA from cleavage by the MwoI endonuclease. This is Type II methyltransferase M.MwoI from Methanothermobacter wolfeii (Methanobacterium wolfei).